The sequence spans 415 residues: Styrene monooxygenase StyA (415 aa).

This sequence belongs to the StyA family. Homodimer. A direct interaction with the monooxygenase reductase component StyB seems not to be necessary for the enzymatic activity.

It carries out the reaction styrene + FADH2 + O2 = (S)-styrene oxide + FAD + H2O + H(+). The protein operates within aromatic compound metabolism. In terms of biological role, styrene monooxygenase which catalyzes the first step in the aerobic styrene degradation pathway by enantioselective epoxidation of the vinyl side chain. In a two-component system, a reductase utilizes NADH to reduce FAD, which is then transferred to the oxygenase; the electron transfer is proposed to occur via a diffusing flavin. This is Styrene monooxygenase StyA (styA) from Pseudomonas sp.